Consider the following 150-residue polypeptide: Deoxyuridine 5'-triphosphate nucleotidohydrolase (150 aa).

Substrate-binding positions include 69 to 71 (RSG), N82, and 86 to 88 (TID).

It belongs to the dUTPase family. It depends on Mg(2+) as a cofactor.

It catalyses the reaction dUTP + H2O = dUMP + diphosphate + H(+). It functions in the pathway pyrimidine metabolism; dUMP biosynthesis; dUMP from dCTP (dUTP route): step 2/2. In terms of biological role, this enzyme is involved in nucleotide metabolism: it produces dUMP, the immediate precursor of thymidine nucleotides and it decreases the intracellular concentration of dUTP so that uracil cannot be incorporated into DNA. In Syntrophus aciditrophicus (strain SB), this protein is Deoxyuridine 5'-triphosphate nucleotidohydrolase.